The sequence spans 984 residues: Ephrin type-B receptor 1 (984 aa).

A signal peptide spans 1–17 (MALDYLLLLLLASAVAA). Over 18-540 (MEETLMDTRT…YKSELREQLP (523 aa)) the chain is Extracellular. The Eph LBD domain maps to 19 to 201 (EETLMDTRTA…FFKKCPSIVQ (183 aa)). 2 consecutive Fibronectin type-III domains span residues 322–432 (VPSG…TNQA) and 433–528 (APST…TLTD). Residues N334, N426, and N480 are each glycosylated (N-linked (GlcNAc...) asparagine). A helical membrane pass occupies residues 541–563 (LIAGSAAAGVVFVVSLVAISIVC). Topologically, residues 564–984 (SRKRAYSKEA…QISQSPTAMA (421 aa)) are cytoplasmic. Position 600 is a phosphotyrosine (Y600). Residues 619 to 882 (VKIEEVIGAG…EIVNTLDKMI (264 aa)) enclose the Protein kinase domain. ATP is bound by residues 625–633 (IGAGEFGEV) and K651. The Proton acceptor role is filled by D744. The SAM domain occupies 911–975 (TAFTTVDDWL…LNSIHSMRVQ (65 aa)). Y928 is modified (phosphotyrosine; by autocatalysis). The PDZ-binding motif lies at 982 to 984 (AMA).

This sequence belongs to the protein kinase superfamily. Tyr protein kinase family. Ephrin receptor subfamily. As to quaternary structure, heterotetramer upon binding of the ligand. The heterotetramer is composed of an ephrin dimer and a receptor dimer. Oligomerization is probably required to induce biological responses. Interacts with EPHB6; transphosphorylates EPHB6 to form an active signaling complex. Interacts with PICK1. Interacts (through Tyr-594) with NCK1 (via SH2 domain); activates the JUN cascade to regulate cell adhesion. The ligand-activated form interacts (through Tyr-928) with GRB7 and GRB10 (via SH2 domains). The ligand-activated form interacts (residues within the catalytic domain) with GRB2 (via SH2 domain). Interacts with GRB2, SHC1 and SRC; activates the MAPK/ERK cascade to regulate cell migration. Interacts with CBL; regulates receptor degradation through ubiquitination. Interacts with ACP1. In terms of processing, phosphorylated. Autophosphorylation is stimulated by the ligand EFNB1. Required for interaction with SH2 domain-containing interactors, for activation of the MAPK/ERK and JUN signaling cascades and for ubiquitination by CBL. Ubiquitinated; (EFNB1)ligand-induced poly- and/or multi-ubiquitination by CBL is regulated by SRC and leads to lysosomal degradation. Preferentially expressed in brain.

Its subcellular location is the cell membrane. The protein localises to the early endosome membrane. It is found in the cell projection. It localises to the dendrite. It catalyses the reaction L-tyrosyl-[protein] + ATP = O-phospho-L-tyrosyl-[protein] + ADP + H(+). Receptor tyrosine kinase which binds promiscuously transmembrane ephrin-B family ligands residing on adjacent cells, leading to contact-dependent bidirectional signaling into neighboring cells. The signaling pathway downstream of the receptor is referred to as forward signaling while the signaling pathway downstream of the ephrin ligand is referred to as reverse signaling. Cognate/functional ephrin ligands for this receptor include EFNB1, EFNB2 and EFNB3. During nervous system development, regulates retinal axon guidance redirecting ipsilaterally ventrotemporal retinal ganglion cells axons at the optic chiasm midline. This probably requires repulsive interaction with EFNB2. In the adult nervous system together with EFNB3, regulates chemotaxis, proliferation and polarity of the hippocampus neural progenitors. In addition to its role in axon guidance also plays an important redundant role with other ephrin-B receptors in development and maturation of dendritic spines and synapse formation. May also regulate angiogenesis. More generally, may play a role in targeted cell migration and adhesion. Upon activation by EFNB1 and probably other ephrin-B ligands activates the MAPK/ERK and the JNK signaling cascades to regulate cell migration and adhesion respectively. Involved in the maintenance of the pool of satellite cells (muscle stem cells) by promoting their self-renewal and reducing their activation and differentiation. This Homo sapiens (Human) protein is Ephrin type-B receptor 1 (EPHB1).